The primary structure comprises 282 residues: Bis(5'-nucleosyl)-tetraphosphatase, symmetrical (282 aa).

Belongs to the Ap4A hydrolase family.

It catalyses the reaction P(1),P(4)-bis(5'-adenosyl) tetraphosphate + H2O = 2 ADP + 2 H(+). In terms of biological role, hydrolyzes diadenosine 5',5'''-P1,P4-tetraphosphate to yield ADP. The protein is Bis(5'-nucleosyl)-tetraphosphatase, symmetrical of Klebsiella pneumoniae subsp. pneumoniae (strain ATCC 700721 / MGH 78578).